The chain runs to 345 residues: Probable dual-specificity RNA methyltransferase RlmN (345 aa).

Glu-93 (proton acceptor) is an active-site residue. In terms of domain architecture, Radical SAM core spans 99–326 (DDERATLCIS…TTIRASRGED (228 aa)). Cys-106 and Cys-331 form a disulfide bridge. [4Fe-4S] cluster is bound by residues Cys-113, Cys-117, and Cys-120. S-adenosyl-L-methionine-binding positions include 158–159 (GE), Ser-190, 212–214 (SLH), and His-288. Residue Cys-331 is the S-methylcysteine intermediate of the active site.

The protein belongs to the radical SAM superfamily. RlmN family. The cofactor is [4Fe-4S] cluster.

The protein localises to the cytoplasm. The catalysed reaction is adenosine(2503) in 23S rRNA + 2 reduced [2Fe-2S]-[ferredoxin] + 2 S-adenosyl-L-methionine = 2-methyladenosine(2503) in 23S rRNA + 5'-deoxyadenosine + L-methionine + 2 oxidized [2Fe-2S]-[ferredoxin] + S-adenosyl-L-homocysteine. It carries out the reaction adenosine(37) in tRNA + 2 reduced [2Fe-2S]-[ferredoxin] + 2 S-adenosyl-L-methionine = 2-methyladenosine(37) in tRNA + 5'-deoxyadenosine + L-methionine + 2 oxidized [2Fe-2S]-[ferredoxin] + S-adenosyl-L-homocysteine. Its function is as follows. Specifically methylates position 2 of adenine 2503 in 23S rRNA and position 2 of adenine 37 in tRNAs. The protein is Probable dual-specificity RNA methyltransferase RlmN of Bacteroides thetaiotaomicron (strain ATCC 29148 / DSM 2079 / JCM 5827 / CCUG 10774 / NCTC 10582 / VPI-5482 / E50).